We begin with the raw amino-acid sequence, 450 residues long: Ribulose bisphosphate carboxylase large chain (450 aa).

An N6,N6,N6-trimethyllysine modification is found at lysine 4. Residues asparagine 113 and threonine 163 each contribute to the substrate site. Catalysis depends on lysine 165, which acts as the Proton acceptor. Lysine 167 serves as a coordination point for substrate. Residues lysine 191, aspartate 193, and glutamate 194 each coordinate Mg(2+). Lysine 191 is modified (N6-carboxylysine). The active-site Proton acceptor is the histidine 284. Residues arginine 285, histidine 317, and serine 369 each contribute to the substrate site.

This sequence belongs to the RuBisCO large chain family. Type I subfamily. As to quaternary structure, heterohexadecamer of 8 large chains and 8 small chains; disulfide-linked. The disulfide link is formed within the large subunit homodimers. Requires Mg(2+) as cofactor. Post-translationally, the disulfide bond which can form in the large chain dimeric partners within the hexadecamer appears to be associated with oxidative stress and protein turnover.

The protein resides in the plastid. The protein localises to the chloroplast. The catalysed reaction is 2 (2R)-3-phosphoglycerate + 2 H(+) = D-ribulose 1,5-bisphosphate + CO2 + H2O. The enzyme catalyses D-ribulose 1,5-bisphosphate + O2 = 2-phosphoglycolate + (2R)-3-phosphoglycerate + 2 H(+). Functionally, ruBisCO catalyzes two reactions: the carboxylation of D-ribulose 1,5-bisphosphate, the primary event in carbon dioxide fixation, as well as the oxidative fragmentation of the pentose substrate in the photorespiration process. Both reactions occur simultaneously and in competition at the same active site. The chain is Ribulose bisphosphate carboxylase large chain from Sedum rubrotinctum (Jelly bean plant).